The following is a 493-amino-acid chain: UDP-N-acetylmuramoyl-L-alanyl-D-glutamate--2,6-diaminopimelate ligase (493 aa).

Residue threonine 32 coordinates UDP-N-acetyl-alpha-D-muramoyl-L-alanyl-D-glutamate. 110-116 lines the ATP pocket; that stretch reads GTNGKTT. UDP-N-acetyl-alpha-D-muramoyl-L-alanyl-D-glutamate contacts are provided by residues asparagine 151, 152-153, serine 179, and arginine 187; that span reads TT. N6-carboxylysine is present on lysine 219. Meso-2,6-diaminopimelate contacts are provided by residues arginine 386, 410–413, glycine 460, and glutamate 464; that span reads DNPR. The Meso-diaminopimelate recognition motif signature appears at 410 to 413; it reads DNPR.

This sequence belongs to the MurCDEF family. MurE subfamily. Requires Mg(2+) as cofactor. Post-translationally, carboxylation is probably crucial for Mg(2+) binding and, consequently, for the gamma-phosphate positioning of ATP.

The protein resides in the cytoplasm. It carries out the reaction UDP-N-acetyl-alpha-D-muramoyl-L-alanyl-D-glutamate + meso-2,6-diaminopimelate + ATP = UDP-N-acetyl-alpha-D-muramoyl-L-alanyl-gamma-D-glutamyl-meso-2,6-diaminopimelate + ADP + phosphate + H(+). It participates in cell wall biogenesis; peptidoglycan biosynthesis. Its function is as follows. Catalyzes the addition of meso-diaminopimelic acid to the nucleotide precursor UDP-N-acetylmuramoyl-L-alanyl-D-glutamate (UMAG) in the biosynthesis of bacterial cell-wall peptidoglycan. This Lactiplantibacillus plantarum (strain ATCC BAA-793 / NCIMB 8826 / WCFS1) (Lactobacillus plantarum) protein is UDP-N-acetylmuramoyl-L-alanyl-D-glutamate--2,6-diaminopimelate ligase.